A 420-amino-acid chain; its full sequence is 3-isopropylmalate dehydratase large subunit (420 aa).

The [4Fe-4S] cluster site is built by Cys300, Cys360, and Cys363.

It belongs to the aconitase/IPM isomerase family. LeuC type 2 subfamily. Heterodimer of LeuC and LeuD. It depends on [4Fe-4S] cluster as a cofactor.

The enzyme catalyses (2R,3S)-3-isopropylmalate = (2S)-2-isopropylmalate. The protein operates within amino-acid biosynthesis; L-leucine biosynthesis; L-leucine from 3-methyl-2-oxobutanoate: step 2/4. Catalyzes the isomerization between 2-isopropylmalate and 3-isopropylmalate, via the formation of 2-isopropylmaleate. The sequence is that of 3-isopropylmalate dehydratase large subunit from Helicobacter hepaticus (strain ATCC 51449 / 3B1).